Consider the following 191-residue polypeptide: Protein YceI (191 aa).

The N-terminal stretch at 1 to 22 (MKKSLLGLTFASLMFSAGSAVA) is a signal peptide.

The protein belongs to the UPF0312 family. Type 1 subfamily.

It localises to the periplasm. The sequence is that of Protein YceI from Shigella boydii serotype 4 (strain Sb227).